We begin with the raw amino-acid sequence, 590 residues long: Muscarinic acetylcholine receptor M3 (590 aa).

Over Met1 to Gln67 the chain is Extracellular. N-linked (GlcNAc...) asparagine glycans are attached at residues Asn6, Asn15, Asn41, and Asn48. The chain crosses the membrane as a helical span at residues Val68–Val91. Residues Ser92–Asn104 are Cytoplasmic-facing. The chain crosses the membrane as a helical span at residues Tyr105–Ile130. Residues Met131–Asp142 are Extracellular-facing. A disulfide bond links Cys141 and Cys221. The chain crosses the membrane as a helical span at residues Leu143–Phe164. The Cytoplasmic segment spans residues Asp165–Arg184. The chain crosses the membrane as a helical span at residues Ala185–Phe206. At Trp207–Pro229 the chain is on the extracellular side. The helical transmembrane segment at Thr230–Trp252 threads the bilayer. Over Arg253–Gln491 the chain is Cytoplasmic. Residues Ala275–Val281 carry the Basolateral sorting signal motif. Positions Ser323–Ile357 are disordered. The segment covering Ser334–Ser345 has biased composition (low complexity). Ser385 is subject to Phosphoserine. The helical transmembrane segment at Thr492–Asn514 threads the bilayer. Over Thr515–Trp526 the chain is Extracellular. An intrachain disulfide couples Cys517 to Cys520. Residues Asn527–Leu546 traverse the membrane as a helical segment. Residues Cys547 to Leu590 are Cytoplasmic-facing.

This sequence belongs to the G-protein coupled receptor 1 family. Muscarinic acetylcholine receptor subfamily. CHRM3 sub-subfamily. In terms of assembly, homodimer; the dimers can form tetramers. Interacts with NALCN. Interacts with TMEM147.

It localises to the cell membrane. The protein resides in the postsynaptic cell membrane. The protein localises to the basolateral cell membrane. It is found in the endoplasmic reticulum membrane. Functionally, the muscarinic acetylcholine receptor mediates various cellular responses, including inhibition of adenylate cyclase, breakdown of phosphoinositides and modulation of potassium channels through the action of G proteins. Primary transducing effect is Pi turnover. This chain is Muscarinic acetylcholine receptor M3 (CHRM3), found in Pongo pygmaeus (Bornean orangutan).